Here is a 128-residue protein sequence, read N- to C-terminus: Large ribosomal subunit protein bL12 (128 aa).

This sequence belongs to the bacterial ribosomal protein bL12 family. Homodimer. Part of the ribosomal stalk of the 50S ribosomal subunit. Forms a multimeric L10(L12)X complex, where L10 forms an elongated spine to which 2 to 4 L12 dimers bind in a sequential fashion. Binds GTP-bound translation factors.

Forms part of the ribosomal stalk which helps the ribosome interact with GTP-bound translation factors. Is thus essential for accurate translation. In Halorhodospira halophila (strain DSM 244 / SL1) (Ectothiorhodospira halophila (strain DSM 244 / SL1)), this protein is Large ribosomal subunit protein bL12.